The primary structure comprises 147 residues: Epididymal secretory protein E3-alpha (147 aa).

The N-terminal stretch at 1–25 (MTSSLKIWGILLALLCILCRLCVYS) is a signal peptide.

Epididymis, with predominant expression in the corpus region. Moderately expressed in the vas deferens; only low levels are detectable in the caput and cauda regions.

It localises to the secreted. Its function is as follows. Possible function in sperm maturation. The polypeptide is Epididymal secretory protein E3-alpha (EDDM3A) (Homo sapiens (Human)).